A 211-amino-acid chain; its full sequence is 2,3-bisphosphoglycerate-dependent phosphoglycerate mutase (211 aa).

Substrate contacts are provided by residues 9–16 (RHGQSDWN), 22–23 (TG), Arg61, 88–91 (ERDY), Lys99, 115–116 (RR), and 159–160 (GN). Residue His10 is the Tele-phosphohistidine intermediate of the active site. Glu88 functions as the Proton donor/acceptor in the catalytic mechanism.

It belongs to the phosphoglycerate mutase family. BPG-dependent PGAM subfamily. Homodimer.

The catalysed reaction is (2R)-2-phosphoglycerate = (2R)-3-phosphoglycerate. It participates in carbohydrate degradation; glycolysis; pyruvate from D-glyceraldehyde 3-phosphate: step 3/5. Its function is as follows. Catalyzes the interconversion of 2-phosphoglycerate and 3-phosphoglycerate. The protein is 2,3-bisphosphoglycerate-dependent phosphoglycerate mutase of Rhizobium etli (strain CIAT 652).